Reading from the N-terminus, the 411-residue chain is Serine--tRNA ligase (411 aa).

226 to 228 (TSE) is an L-serine binding site. 257–259 (RKE) is an ATP binding site. Glu280 serves as a coordination point for L-serine. 344-347 (EISS) serves as a coordination point for ATP. Position 379 (Ser379) interacts with L-serine.

This sequence belongs to the class-II aminoacyl-tRNA synthetase family. Type-1 seryl-tRNA synthetase subfamily. As to quaternary structure, homodimer. The tRNA molecule binds across the dimer.

It localises to the cytoplasm. The enzyme catalyses tRNA(Ser) + L-serine + ATP = L-seryl-tRNA(Ser) + AMP + diphosphate + H(+). It catalyses the reaction tRNA(Sec) + L-serine + ATP = L-seryl-tRNA(Sec) + AMP + diphosphate + H(+). Its pathway is aminoacyl-tRNA biosynthesis; selenocysteinyl-tRNA(Sec) biosynthesis; L-seryl-tRNA(Sec) from L-serine and tRNA(Sec): step 1/1. Its function is as follows. Catalyzes the attachment of serine to tRNA(Ser). Is also able to aminoacylate tRNA(Sec) with serine, to form the misacylated tRNA L-seryl-tRNA(Sec), which will be further converted into selenocysteinyl-tRNA(Sec). The sequence is that of Serine--tRNA ligase from Campylobacter jejuni (strain RM1221).